Reading from the N-terminus, the 120-residue chain is Large ribosomal subunit protein uL18 (120 aa).

The protein belongs to the universal ribosomal protein uL18 family. As to quaternary structure, part of the 50S ribosomal subunit; part of the 5S rRNA/L5/L18/L25 subcomplex. Contacts the 5S and 23S rRNAs.

Functionally, this is one of the proteins that bind and probably mediate the attachment of the 5S RNA into the large ribosomal subunit, where it forms part of the central protuberance. The polypeptide is Large ribosomal subunit protein uL18 (Hyphomonas neptunium (strain ATCC 15444)).